A 340-amino-acid chain; its full sequence is Glyceraldehyde-3-phosphate dehydrogenase (340 aa).

Residues 11–12 and G109 each bind NAD(+); that span reads TI. 138-140 contributes to the D-glyceraldehyde 3-phosphate binding site; it reads SCN. The Nucleophile role is filled by C139. R167 contributes to the NAD(+) binding site. 193 to 194 is a binding site for D-glyceraldehyde 3-phosphate; sequence HA. Residue Q300 participates in NAD(+) binding.

The protein belongs to the glyceraldehyde-3-phosphate dehydrogenase family. As to quaternary structure, homotetramer.

It localises to the cytoplasm. It carries out the reaction D-glyceraldehyde 3-phosphate + phosphate + NADP(+) = (2R)-3-phospho-glyceroyl phosphate + NADPH + H(+). The catalysed reaction is D-glyceraldehyde 3-phosphate + phosphate + NAD(+) = (2R)-3-phospho-glyceroyl phosphate + NADH + H(+). It functions in the pathway carbohydrate degradation; glycolysis; pyruvate from D-glyceraldehyde 3-phosphate: step 1/5. This Metallosphaera sedula (strain ATCC 51363 / DSM 5348 / JCM 9185 / NBRC 15509 / TH2) protein is Glyceraldehyde-3-phosphate dehydrogenase.